A 102-amino-acid chain; its full sequence is Synaptobrevin-like protein 5 (102 aa).

The v-SNARE coiled-coil homology domain maps to Lys17–Lys77.

The chain is Synaptobrevin-like protein 5 (snb-5) from Caenorhabditis elegans.